We begin with the raw amino-acid sequence, 453 residues long: Adenosylmethionine-8-amino-7-oxononanoate aminotransferase (453 aa).

Residue 118–119 (GA) participates in pyridoxal 5'-phosphate binding. Tyrosine 151 contributes to the substrate binding site. Pyridoxal 5'-phosphate is bound at residue aspartate 257. Substrate is bound by residues lysine 286, glycine 321, and arginine 416. An N6-(pyridoxal phosphate)lysine modification is found at lysine 286.

It belongs to the class-III pyridoxal-phosphate-dependent aminotransferase family. BioA subfamily. In terms of assembly, homodimer. It depends on pyridoxal 5'-phosphate as a cofactor.

It localises to the cytoplasm. The enzyme catalyses (8S)-8-amino-7-oxononanoate + S-adenosyl-L-methionine = S-adenosyl-4-methylsulfanyl-2-oxobutanoate + (7R,8S)-7,8-diammoniononanoate. It participates in cofactor biosynthesis; biotin biosynthesis; 7,8-diaminononanoate from 8-amino-7-oxononanoate (SAM route): step 1/1. Catalyzes the transfer of the alpha-amino group from S-adenosyl-L-methionine (SAM) to 7-keto-8-aminopelargonic acid (KAPA) to form 7,8-diaminopelargonic acid (DAPA). It is the only aminotransferase known to utilize SAM as an amino donor. In Aquifex aeolicus (strain VF5), this protein is Adenosylmethionine-8-amino-7-oxononanoate aminotransferase.